The primary structure comprises 198 residues: MTIKLELLESALRNALGDQLQSLTLALGEITIVVNSRDYASAMRVLRDHADLRFEELIDLCGVDYSTYGDGAWDGQRFAVVSHLLSITHNWRVRVRVFASDDEMPVVASMTEIWPAANWYEREAFDFFGILFEGHNDLRRILTDYGFIGHPFRKDFPVSGYVEMRYDPEQKRVIYQPVTIDPRENVPRVIREEQYGMK.

The protein belongs to the complex I 30 kDa subunit family. As to quaternary structure, NDH-1 is composed of 14 different subunits. Subunits NuoB, C, D, E, F, and G constitute the peripheral sector of the complex.

It localises to the cell inner membrane. The catalysed reaction is a quinone + NADH + 5 H(+)(in) = a quinol + NAD(+) + 4 H(+)(out). Functionally, NDH-1 shuttles electrons from NADH, via FMN and iron-sulfur (Fe-S) centers, to quinones in the respiratory chain. The immediate electron acceptor for the enzyme in this species is believed to be ubiquinone. Couples the redox reaction to proton translocation (for every two electrons transferred, four hydrogen ions are translocated across the cytoplasmic membrane), and thus conserves the redox energy in a proton gradient. In Herminiimonas arsenicoxydans, this protein is NADH-quinone oxidoreductase subunit C.